The primary structure comprises 553 residues: Probable malate:quinone oxidoreductase (553 aa).

The span at 534 to 543 (QLKPQVQPQP) shows a compositional bias: low complexity. A disordered region spans residues 534–553 (QLKPQVQPQPAHKAVADIAL).

Belongs to the MQO family. The cofactor is FAD.

The catalysed reaction is (S)-malate + a quinone = a quinol + oxaloacetate. Its pathway is carbohydrate metabolism; tricarboxylic acid cycle; oxaloacetate from (S)-malate (quinone route): step 1/1. This Citrobacter koseri (strain ATCC BAA-895 / CDC 4225-83 / SGSC4696) protein is Probable malate:quinone oxidoreductase.